Here is a 226-residue protein sequence, read N- to C-terminus: ATP synthase F(0) complex subunit a (226 aa).

6 helical membrane passes run 5 to 25 (LFAP…LIII), 68 to 88 (WSLM…LGML), 97 to 117 (QLSM…ATGF), 136 to 156 (FLIP…PVAL), 179 to 199 (LVLM…LALL), and 201 to 221 (ILEF…VSLY).

Belongs to the ATPase A chain family. As to quaternary structure, component of the ATP synthase complex composed at least of ATP5F1A/subunit alpha, ATP5F1B/subunit beta, ATP5MC1/subunit c (homooctomer), MT-ATP6/subunit a, MT-ATP8/subunit 8, ATP5ME/subunit e, ATP5MF/subunit f, ATP5MG/subunit g, ATP5MK/subunit k, ATP5MJ/subunit j, ATP5F1C/subunit gamma, ATP5F1D/subunit delta, ATP5F1E/subunit epsilon, ATP5PF/subunit F6, ATP5PB/subunit b, ATP5PD/subunit d, ATP5PO/subunit OSCP. ATP synthase complex consists of a soluble F(1) head domain (subunits alpha(3) and beta(3)) - the catalytic core - and a membrane F(0) domain - the membrane proton channel (subunits c, a, 8, e, f, g, k and j). These two domains are linked by a central stalk (subunits gamma, delta, and epsilon) rotating inside the F1 region and a stationary peripheral stalk (subunits F6, b, d, and OSCP). Interacts with DNAJC30; interaction is direct.

Its subcellular location is the mitochondrion inner membrane. The enzyme catalyses H(+)(in) = H(+)(out). Its function is as follows. Subunit a, of the mitochondrial membrane ATP synthase complex (F(1)F(0) ATP synthase or Complex V) that produces ATP from ADP in the presence of a proton gradient across the membrane which is generated by electron transport complexes of the respiratory chain. ATP synthase complex consist of a soluble F(1) head domain - the catalytic core - and a membrane F(1) domain - the membrane proton channel. These two domains are linked by a central stalk rotating inside the F(1) region and a stationary peripheral stalk. During catalysis, ATP synthesis in the catalytic domain of F(1) is coupled via a rotary mechanism of the central stalk subunits to proton translocation. With the subunit c (ATP5MC1), forms the proton-conducting channel in the F(0) domain, that contains two crucial half-channels (inlet and outlet) that facilitate proton movement from the mitochondrial intermembrane space (IMS) into the matrix. Protons are taken up via the inlet half-channel and released through the outlet half-channel, following a Grotthuss mechanism. The polypeptide is ATP synthase F(0) complex subunit a (Balaenoptera musculus (Blue whale)).